Here is a 441-residue protein sequence, read N- to C-terminus: Tubulin beta chain (441 aa).

GTP-binding residues include Q11, E69, S138, G142, T143, G144, N204, and N226. E69 lines the Mg(2+) pocket.

It belongs to the tubulin family. Dimer of alpha and beta chains. A typical microtubule is a hollow water-filled tube with an outer diameter of 25 nm and an inner diameter of 15 nM. Alpha-beta heterodimers associate head-to-tail to form protofilaments running lengthwise along the microtubule wall with the beta-tubulin subunit facing the microtubule plus end conferring a structural polarity. Microtubules usually have 13 protofilaments but different protofilament numbers can be found in some organisms and specialized cells. The cofactor is Mg(2+).

It is found in the cytoplasm. The protein resides in the cytoskeleton. Tubulin is the major constituent of microtubules, a cylinder consisting of laterally associated linear protofilaments composed of alpha- and beta-tubulin heterodimers. Microtubules grow by the addition of GTP-tubulin dimers to the microtubule end, where a stabilizing cap forms. Below the cap, tubulin dimers are in GDP-bound state, owing to GTPase activity of alpha-tubulin. This Babesia bovis protein is Tubulin beta chain.